The primary structure comprises 217 residues: Large ribosomal subunit protein uL3 (217 aa).

Residues 127-162 (GFSRGPMSHGSKNHRAPGSTGAGTTPGRIYPGKRMA) form a disordered region. Low complexity predominate over residues 142–153 (APGSTGAGTTPG).

The protein belongs to the universal ribosomal protein uL3 family. In terms of assembly, part of the 50S ribosomal subunit. Forms a cluster with proteins L14 and L19.

Functionally, one of the primary rRNA binding proteins, it binds directly near the 3'-end of the 23S rRNA, where it nucleates assembly of the 50S subunit. This Prochlorococcus marinus (strain AS9601) protein is Large ribosomal subunit protein uL3.